A 465-amino-acid chain; its full sequence is DEAD-box ATP-dependent RNA helicase 55 (465 aa).

A Q motif motif is present at residues phenylalanine 17–alanine 45. The Helicase ATP-binding domain maps to isoleucine 48–lysine 219. An ATP-binding site is contributed by alanine 61–threonine 68. The DEAD box motif lies at aspartate 167–aspartate 170. Residues glutamine 228–glycine 422 enclose the Helicase C-terminal domain. Positions lysine 413–leucine 465 are disordered. The span at serine 428 to lysine 437 shows a compositional bias: basic and acidic residues. The segment covering glutamine 456–leucine 465 has biased composition (acidic residues).

It belongs to the DEAD box helicase family. DDX55/SPB4 subfamily.

It catalyses the reaction ATP + H2O = ADP + phosphate + H(+). This Arabidopsis thaliana (Mouse-ear cress) protein is DEAD-box ATP-dependent RNA helicase 55 (RH55).